A 337-amino-acid chain; its full sequence is Inositol 2-dehydrogenase (337 aa).

Belongs to the Gfo/Idh/MocA family. As to quaternary structure, homotetramer.

It catalyses the reaction myo-inositol + NAD(+) = scyllo-inosose + NADH + H(+). In terms of biological role, involved in the oxidation of myo-inositol (MI) to 2-keto-myo-inositol (2KMI or 2-inosose). The polypeptide is Inositol 2-dehydrogenase (Burkholderia vietnamiensis (strain G4 / LMG 22486) (Burkholderia cepacia (strain R1808))).